Here is a 643-residue protein sequence, read N- to C-terminus: Protein cueball (643 aa).

The signal sequence occupies residues 1-21; that stretch reads MMIWVPALIFLSACLLPRSNG. Residues 22-530 lie on the Extracellular side of the membrane; sequence TPLEWDFAVT…VCQTPFVWTS (509 aa). Residues Asn-77 and Asn-103 are each glycosylated (N-linked (GlcNAc...) asparagine). LDL-receptor class B repeat units lie at residues 116 to 163, 164 to 208, and 209 to 254; these read RNLF…DICR, RKLY…DQLS, and DRLF…TNDA. Asn-172 is a glycosylation site (N-linked (GlcNAc...) asparagine). The span at 276-290 shows a compositional bias: polar residues; the sequence is ATTTVRPEVESSTDG. A disordered region spans residues 276-303; sequence ATTTVRPEVESSTDGTESESKQESEPVE. N-linked (GlcNAc...) asparagine glycosylation is present at Asn-312. EGF-like domains lie at 363-397, 398-429, and 432-470; these read RMDQLERDHCMNGGSYISKRDLCICPAGFKGSRCE, IRECHNYCVHGTCQMSDLAYPKCYCQPGFTGE, and EVSNCAGLCLNGGHCRLGETEKDQPSCECPANFAGERCE. Intrachain disulfides connect Cys-372/Cys-385, Cys-387/Cys-396, Cys-401/Cys-410, Cys-405/Cys-420, Cys-436/Cys-446, Cys-440/Cys-458, and Cys-460/Cys-469. N-linked (GlcNAc...) asparagine glycans are attached at residues Asn-472 and Asn-507. A helical transmembrane segment spans residues 531–551; it reads SVIIILVVGIVFSLLLITTII. At 552 to 643 the chain is on the cytoplasmic side; sequence HGIRRLYKPK…LIHNMEDDLY (92 aa).

It belongs to the cueball family.

The protein resides in the cell membrane. Has a role in spermatogenesis and oogenesis. The sequence is that of Protein cueball from Drosophila ananassae (Fruit fly).